The following is a 387-amino-acid chain: Odorant receptor 19a (387 aa).

At 1 to 40 (MDISKVDSTRALVNHWRIFRIMGIHPPGKRTFWGRHYTAY) the chain is on the cytoplasmic side. The chain crosses the membrane as a helical span at residues 41-61 (SMVWNVTFHICIWVSFSVNLL). Residues 62–71 (QSNSLETFCE) are Extracellular-facing. A helical transmembrane segment spans residues 72–92 (SLCVTMPHTLYMLKLINVRRM). Residues 93–127 (RGQMISSHWLLRLLDKRLGCDDERQIIMAGIERAE) are Cytoplasmic-facing. A helical membrane pass occupies residues 128–148 (FIFRTIFRGLACTVVLGIIYI). At 149–171 (SASSEPTLMYPTWIPWNWRDSTS) the chain is on the extracellular side. Residues 172-192 (AYLATAMLHTTALMANATLVL) form a helical membrane-spanning segment. Over 193 to 254 (NLSSYPGTYL…LRLFKSLERS (62 aa)) the chain is Cytoplasmic. The chain crosses the membrane as a helical span at residues 255–275 (LSMTCFLQFFSTACAQCTICY). The Extracellular portion of the chain corresponds to 276 to 285 (FLLFGNVGIM). The chain crosses the membrane as a helical span at residues 286 to 306 (RFMNMLFLLVILTTETLLLCY). Topologically, residues 307–336 (TAELPCKEGESLLTAVYSCNWLSQSVNFRR) are cytoplasmic. The helical transmembrane segment at 337 to 357 (LLLLMLARCQIPMILVSGVIV) threads the bilayer. At 358–387 (PISMKTFTVMIKGAYTMLTLLNEIRKTSLE) the chain is on the extracellular side.

It belongs to the insect chemoreceptor superfamily. Heteromeric odorant receptor channel (TC 1.A.69) family. Or2a subfamily. In terms of assembly, interacts with Orco. Complexes exist early in the endomembrane system in olfactory sensory neurons (OSNs), coupling these complexes to the conserved ciliary trafficking pathway. In terms of tissue distribution, expressed in ai2A olfactory sensory neurons in the antenna.

Its subcellular location is the cell membrane. Odorant receptor which mediates acceptance or avoidance behavior, depending on its substrates. The odorant receptor repertoire encodes a large collection of odor stimuli that vary widely in identity, intensity, and duration. May form a complex with Orco to form odorant-sensing units, providing sensitive and prolonged odorant signaling and calcium permeability. Involved in the preference for citrus fruits for oviposition, especially through the response to valencene, the primary ligand of Or19a. Larvae growing on citrus fruits suffer a reduced risk of parasitism since endoparasitoid wasps that parasitize larvae are strongly repelled by the smell of citrus, as well as by valencene. The chain is Odorant receptor 19a (Or19a) from Drosophila melanogaster (Fruit fly).